The chain runs to 216 residues: Protein-L-isoaspartate O-methyltransferase (216 aa).

Ser65 is an active-site residue.

Belongs to the methyltransferase superfamily. L-isoaspartyl/D-aspartyl protein methyltransferase family.

The protein resides in the cytoplasm. The enzyme catalyses [protein]-L-isoaspartate + S-adenosyl-L-methionine = [protein]-L-isoaspartate alpha-methyl ester + S-adenosyl-L-homocysteine. In terms of biological role, catalyzes the methyl esterification of L-isoaspartyl residues in peptides and proteins that result from spontaneous decomposition of normal L-aspartyl and L-asparaginyl residues. It plays a role in the repair and/or degradation of damaged proteins. The sequence is that of Protein-L-isoaspartate O-methyltransferase from Chlorobium phaeobacteroides (strain DSM 266 / SMG 266 / 2430).